The chain runs to 832 residues: MPLSYQHFRRLLLLDDEAGPLEEELPRLADEGLNRHVAEELNLGNLNVSIPWTHKVGNFTGLYSSTVPVFNPHWKTPSFPNIHLHQDIIKKCEQFVGPLTVNEKRRLQLIMPARFYPKVTKYLPLDKGIKPYYPEHLVNHYFQTRHYLHTLWKAGVLYKRETTHSASFCGSPYSWEQELQHGAESFHQQSSGILSRPPVGSSLQSKHCKSRLGLQSQQGLLARRQQGRSWSIRAGIHPTARRPFGVEPSGSGHTTNLASKSASCLHQSPVRKATYPSVSTFEKHSSSGHAVELHNLPPNSARSQSERPVSPCWWLQFRNSKPCSDYCLSHIVNLLEDWGPCAEHGEHHIRIPRTPARVTGGVFLVDKNPHNTEESRLVVDFSQFSRGNHRVSWPKFAVPNLQSLTNLLSSNLSWLSLDVSAAFYHLPLHPAAMPHLLVGSSGLSRYVARLSSDSRIFNHQHGTMQNLHDSCSRNLYVSLLLLYQTFGRKLHLYSHPIILGFRKIPMGVGLSPFLLAQFTSAICSVVRRAFPHCLAFSYMDDVVLGAKTVHHLESLFTAVTNFLLSLGIHLNPNKTKRWGYSLHFMGYVIGCYGSLPQDHIIQKIKECFRKLPVNRPIDWKVCQRIVGLLGFAAPFTQCGYPALMPLYACIQSKQAFTFSPTYKAFLCKQYLNLYPVARQRPGLCQVFADATPTGWGLVMGHQRMRGTFQAPLPIHTAELLAACFARSRSGANILGTDNSVVLSRKYTSFPWLLGCAANWILRGTSFVYVPSALNPADDPSRGRLGLSRPLLRLPFRPTTGRTSLYADSPSVPSHLPDRVHFASPLHVAWRPP.

Positions Met-1–Gln-177 are terminal protein domain (TP). The spacer stretch occupies residues Glu-178–Leu-335. The tract at residues Arg-241 to Ser-263 is disordered. Positions Ser-251–Ser-263 are enriched in polar residues. The tract at residues Glu-336–Gln-679 is polymerase/reverse transcriptase domain (RT). Residues Glu-346 to Ile-589 form the Reverse transcriptase domain. Mg(2+) contacts are provided by Asp-418, Asp-540, and Asp-541.

Belongs to the hepadnaviridae P protein family.

It catalyses the reaction DNA(n) + a 2'-deoxyribonucleoside 5'-triphosphate = DNA(n+1) + diphosphate. The catalysed reaction is Endonucleolytic cleavage to 5'-phosphomonoester.. Activated by host HSP70 and HSP40 in vitro to be able to bind the epsilon loop of the pgRNA. Because deletion of the RNase H region renders the protein partly chaperone-independent, the chaperones may be needed indirectly to relieve occlusion of the RNA-binding site by this domain. Inhibited by several reverse-transcriptase inhibitors: Lamivudine, Adefovir and Entecavir. Multifunctional enzyme that converts the viral RNA genome into dsDNA in viral cytoplasmic capsids. This enzyme displays a DNA polymerase activity that can copy either DNA or RNA templates, and a ribonuclease H (RNase H) activity that cleaves the RNA strand of RNA-DNA heteroduplexes in a partially processive 3'- to 5'-endonucleasic mode. Neo-synthesized pregenomic RNA (pgRNA) are encapsidated together with the P protein, and reverse-transcribed inside the nucleocapsid. Initiation of reverse-transcription occurs first by binding the epsilon loop on the pgRNA genome, and is initiated by protein priming, thereby the 5'-end of (-)DNA is covalently linked to P protein. Partial (+)DNA is synthesized from the (-)DNA template and generates the relaxed circular DNA (RC-DNA) genome. After budding and infection, the RC-DNA migrates in the nucleus, and is converted into a plasmid-like covalently closed circular DNA (cccDNA). The activity of P protein does not seem to be necessary for cccDNA generation, and is presumably released from (+)DNA by host nuclear DNA repair machinery. The protein is Protein P of Homo sapiens (Human).